The sequence spans 982 residues: Probable beta-galactosidase C (982 aa).

A signal peptide spans 1 to 21 (MRLFALLPVLLGLISSHFVSA). Substrate-binding residues include Tyr-80, Asn-125, Ala-126, Glu-127, and Asn-185. Glu-186 functions as the Proton donor in the catalytic mechanism. Tyr-249 is a substrate binding site. The cysteines at positions 255 and 302 are disulfide-linked. The N-linked (GlcNAc...) asparagine glycan is linked to Asn-274. Residue Glu-285 is the Nucleophile of the active site. Tyr-351 is a substrate binding site. Residues Asn-389, Asn-434, Asn-600, Asn-675, Asn-718, and Asn-785 are each glycosylated (N-linked (GlcNAc...) asparagine).

This sequence belongs to the glycosyl hydrolase 35 family.

It localises to the secreted. The catalysed reaction is Hydrolysis of terminal non-reducing beta-D-galactose residues in beta-D-galactosides.. Functionally, cleaves beta-linked terminal galactosyl residues from gangliosides, glycoproteins, and glycosaminoglycans. This chain is Probable beta-galactosidase C (lacC), found in Penicillium rubens (strain ATCC 28089 / DSM 1075 / NRRL 1951 / Wisconsin 54-1255) (Penicillium chrysogenum).